A 228-amino-acid chain; its full sequence is Ankyrin repeat domain-containing protein 46 (228 aa).

ANK repeat units lie at residues Q11–I40, R44–T74, Q77–I103, and Q107–G138. The helical transmembrane segment at V195 to G215 threads the bilayer.

It is found in the membrane. The chain is Ankyrin repeat domain-containing protein 46 (Ankrd46) from Mus musculus (Mouse).